The chain runs to 52 residues: Large ribosomal subunit protein bL33 (52 aa).

Belongs to the bacterial ribosomal protein bL33 family.

The sequence is that of Large ribosomal subunit protein bL33 from Helicobacter acinonychis (strain Sheeba).